Reading from the N-terminus, the 189-residue chain is Chitin synthase 1 (189 aa).

Belongs to the chitin synthase family. Class I subfamily.

Its subcellular location is the cell membrane. The catalysed reaction is [(1-&gt;4)-N-acetyl-beta-D-glucosaminyl](n) + UDP-N-acetyl-alpha-D-glucosamine = [(1-&gt;4)-N-acetyl-beta-D-glucosaminyl](n+1) + UDP + H(+). Its function is as follows. Polymerizes chitin, a structural polymer of the cell wall and septum, by transferring the sugar moiety of UDP-GlcNAc to the non-reducing end of the growing chitin polymer. The polypeptide is Chitin synthase 1 (chs1) (Botryotinia fuckeliana (Noble rot fungus)).